The following is a 326-amino-acid chain: UPF0324 membrane protein PBPRB0970 (326 aa).

Transmembrane regions (helical) follow at residues 27-49 (FFII…ILGF), 70-89 (LLAY…QAIA), 94-116 (GFGL…TKAL), 123-145 (GHLI…APAI), 155-177 (ALAT…GHLL), 184-206 (FGTW…GAYG), 216-235 (IKLA…ALLF), 242-261 (IGIP…AHFV), 271-290 (IFVA…GSGI), and 303-325 (LLLG…LLNV).

This sequence belongs to the UPF0324 family.

Its subcellular location is the cell membrane. The sequence is that of UPF0324 membrane protein PBPRB0970 from Photobacterium profundum (strain SS9).